Here is a 141-residue protein sequence, read N- to C-terminus: Guanyl-specific ribonuclease Sa3 (141 aa).

Residues 1-36 constitute a signal peptide (or 43); the sequence is MRIPPRLVALAGAAAVAATLIAGPVAAAAPASHAVA. A disulfide bridge connects residues cysteine 52 and cysteine 141. The active-site Proton acceptor is glutamate 99. The active-site Proton donor is histidine 130.

The protein belongs to the ribonuclease N1/T1 family.

The protein localises to the secreted. It carries out the reaction [RNA] containing guanosine + H2O = an [RNA fragment]-3'-guanosine-3'-phosphate + a 5'-hydroxy-ribonucleotide-3'-[RNA fragment].. This Kitasatospora aureofaciens (Streptomyces aureofaciens) protein is Guanyl-specific ribonuclease Sa3 (rnaSA3).